The primary structure comprises 202 residues: Putative 3-methyladenine DNA glycosylase (202 aa).

The protein belongs to the DNA glycosylase MPG family.

The chain is Putative 3-methyladenine DNA glycosylase from Rhodopseudomonas palustris (strain BisB5).